Consider the following 602-residue polypeptide: Sulfite reductase [NADPH] hemoprotein beta-component (602 aa).

Basic and acidic residues predominate over residues 1 to 15; sequence MDDHKTASPPRERSY. Residues 1 to 24 form a disordered region; sequence MDDHKTASPPRERSYETPPAERPI. The [4Fe-4S] cluster site is built by C458, C464, C503, and C507. C507 provides a ligand contact to siroheme.

The protein belongs to the nitrite and sulfite reductase 4Fe-4S domain family. As to quaternary structure, alpha(8)-beta(8). The alpha component is a flavoprotein, the beta component is a hemoprotein. It depends on siroheme as a cofactor. Requires [4Fe-4S] cluster as cofactor.

The enzyme catalyses hydrogen sulfide + 3 NADP(+) + 3 H2O = sulfite + 3 NADPH + 4 H(+). It participates in sulfur metabolism; hydrogen sulfide biosynthesis; hydrogen sulfide from sulfite (NADPH route): step 1/1. Its function is as follows. Component of the sulfite reductase complex that catalyzes the 6-electron reduction of sulfite to sulfide. This is one of several activities required for the biosynthesis of L-cysteine from sulfate. The chain is Sulfite reductase [NADPH] hemoprotein beta-component from Methylobacterium nodulans (strain LMG 21967 / CNCM I-2342 / ORS 2060).